The chain runs to 1445 residues: CD109 antigen (1445 aa).

The first 21 residues, 1–21 (MQGPPLLTAAHLLCVCTAALA), serve as a signal peptide directing secretion. N-linked (GlcNAc...) asparagine glycans are attached at residues asparagine 68, asparagine 118, asparagine 247, asparagine 279, asparagine 365, asparagine 419, asparagine 513, and asparagine 645. The interval 593–702 (DKSVNLMNAS…TWIWLDTNMG (110 aa)) is bait region (approximate). A cross-link (isoglutamyl cysteine thioester (Cys-Gln)) is located at residues 921-924 (CGEQ). 2 N-linked (GlcNAc...) asparagine glycosylation sites follow: asparagine 1086 and asparagine 1355. Alanine 1420 carries GPI-anchor amidated alanine lipidation. The propeptide at 1421–1445 (SGSHHHSSVIFIFCFKLLYFMELWL) is removed in mature form.

The protein belongs to the protease inhibitor I39 (alpha-2-macroglobulin) family. Heterodimer; disulfide-linked. Interacts with TGFB1 and TGFBR1. Forms a heteromeric complex with TGFBR1, TGFBR2 and TGFBR3 in a ligand-independent manner. In terms of processing, N-glycosylated. Post-translationally, 2 forms of 150 (p150) and 120 kDa (p120) exist due to proteolytic degradation from a 180 kDa form. Widely expressed with high level in uterus, aorta, heart, lung, trachea, placenta and in fetal heart, kidney, liver, spleen and lung. Expressed by CD34(+) acute myeloid leukemia cell lines, T-cell lines, activated T-lymphoblasts, endothelial cells and activated platelets. Isoform 4 is expressed in placenta. Isoform 1 is expressed in keratinocytes and placenta.

Its subcellular location is the cell membrane. Functionally, modulates negatively TGFB1 signaling in keratinocytes. The chain is CD109 antigen (CD109) from Homo sapiens (Human).